The primary structure comprises 257 residues: Imidazole glycerol phosphate synthase subunit HisF (257 aa).

Catalysis depends on residues Asp-12 and Asp-131.

Belongs to the HisA/HisF family. As to quaternary structure, heterodimer of HisH and HisF.

The protein localises to the cytoplasm. It carries out the reaction 5-[(5-phospho-1-deoxy-D-ribulos-1-ylimino)methylamino]-1-(5-phospho-beta-D-ribosyl)imidazole-4-carboxamide + L-glutamine = D-erythro-1-(imidazol-4-yl)glycerol 3-phosphate + 5-amino-1-(5-phospho-beta-D-ribosyl)imidazole-4-carboxamide + L-glutamate + H(+). Its pathway is amino-acid biosynthesis; L-histidine biosynthesis; L-histidine from 5-phospho-alpha-D-ribose 1-diphosphate: step 5/9. In terms of biological role, IGPS catalyzes the conversion of PRFAR and glutamine to IGP, AICAR and glutamate. The HisF subunit catalyzes the cyclization activity that produces IGP and AICAR from PRFAR using the ammonia provided by the HisH subunit. This Mycobacteroides abscessus (strain ATCC 19977 / DSM 44196 / CCUG 20993 / CIP 104536 / JCM 13569 / NCTC 13031 / TMC 1543 / L948) (Mycobacterium abscessus) protein is Imidazole glycerol phosphate synthase subunit HisF.